The following is a 519-amino-acid chain: Flavin-dependent halogenase rdc2 (519 aa).

A signal peptide spans 1 to 21 (MSVPKSCTILVAGGGPAGSYA). Residues Gly-14, Ala-17, and Glu-47 each contribute to the FAD site. Ser-324 and Gly-325 together coordinate chloride.

This sequence belongs to the flavin-dependent halogenase family.

The protein operates within secondary metabolite biosynthesis. Flavin-dependent halogenase; part of the gene cluster that mediates the biosynthesis of radicicol, a resorcylic acid lactone (RAL) that irreversibly inhibits the HSP90 molecular chaperone, an important target for cancer chemotherapy. Within the cluster, rdc2 is involved in the chlorination of the resorcylic acid lactone (RAL) structure to convert monocillin I into radicicol. Also chlorinates monocillin II to produce 6-cholomonocillin II and monocilllin IV to produce 13-chloromonocillin IV. In contrast to most fungal halogenases, rdc2 has a broad substrate specificity and can accept a variety of macrolactones as the substrates to generate chlorinated derivatives, including dihydroresorcylide, zearalenone, curvularin, or even curcumin. Rdc2 is able to dichlorinate dihydroresorcylide and monocillin IV. Dihydroresorcylide is first chlorinated at position 11 to produce 11-chlorodihydroresorcylide which can be further chlorinated by rdc2 at possition 13. Mororeover, rdc2 can incorporate bromine into dihydroresorcylide to yield the corresponding mono- and di-brominated derivatives. Finally, rdc2 is also able to halogenate the isoquinolines 4-hydroxyisoquinoline and 6-hydroxyisoquinoline into 3-chloro-4-hydroxyisoquinoline and 5-chloro-6-hydroxyisoquinoline, respectively. The radicicol cluster encodes only two apparent post-PKS enzymes, a cytochrome P450 monooxygenase (rdc4) and a non-heme halogenase (rdc2) that could introduce the epoxide and the chlorine, respectively. If this cluster includes all the genes required for radicicol biosynthesis, the remaining structural features of radicicol are presumably generated by the PKSs rdc1 and rdc5. The C-2' ketone could arise if the R-PKS rdc5 and NR-PKS rdc1 each carry out four iterations, in contrast to the five iteration-three iteration split for the hypothemycin PKSs. The origin of the cis 5',6' double bond is not known. The radicicol R-PKS rdc5 ER domain may catalyze either double bond isomerization or reduction in the third iteration. In Metacordyceps chlamydosporia (Nematophagous fungus), this protein is Flavin-dependent halogenase rdc2.